The sequence spans 132 residues: Small ribosomal subunit protein uS12 (132 aa).

Aspartate 89 carries the 3-methylthioaspartic acid modification.

It belongs to the universal ribosomal protein uS12 family. As to quaternary structure, part of the 30S ribosomal subunit. Contacts proteins S8 and S17. May interact with IF1 in the 30S initiation complex.

In terms of biological role, with S4 and S5 plays an important role in translational accuracy. Interacts with and stabilizes bases of the 16S rRNA that are involved in tRNA selection in the A site and with the mRNA backbone. Located at the interface of the 30S and 50S subunits, it traverses the body of the 30S subunit contacting proteins on the other side and probably holding the rRNA structure together. The combined cluster of proteins S8, S12 and S17 appears to hold together the shoulder and platform of the 30S subunit. This Campylobacter curvus (strain 525.92) protein is Small ribosomal subunit protein uS12.